Reading from the N-terminus, the 291-residue chain is Elongation factor Ts (291 aa).

Residues 79-82 (TDFV) form an involved in Mg(2+) ion dislocation from EF-Tu region.

This sequence belongs to the EF-Ts family.

Its subcellular location is the cytoplasm. Functionally, associates with the EF-Tu.GDP complex and induces the exchange of GDP to GTP. It remains bound to the aminoacyl-tRNA.EF-Tu.GTP complex up to the GTP hydrolysis stage on the ribosome. This chain is Elongation factor Ts, found in Dinoroseobacter shibae (strain DSM 16493 / NCIMB 14021 / DFL 12).